Consider the following 140-residue polypeptide: Oocyte zinc finger protein XlCOF15 (140 aa).

5 consecutive C2H2-type zinc fingers follow at residues 6 to 28 (FTCK…QKIH), 34 to 56 (FTCT…QKVH), 62 to 84 (FICT…HVIH), 90 to 112 (FTCA…RAAH), and 118 to 140 (FICT…LKSH).

It belongs to the krueppel C2H2-type zinc-finger protein family.

It localises to the nucleus. In terms of biological role, may be involved in transcriptional regulation. This chain is Oocyte zinc finger protein XlCOF15, found in Xenopus laevis (African clawed frog).